The following is a 263-amino-acid chain: Outer membrane protein OmpK (263 aa).

An N-terminal signal peptide occupies residues 1 to 20; the sequence is MRKSLLALSLLAATSAPVLA.

It belongs to the nucleoside-specific channel-forming outer membrane porin (Tsx) (TC 1.B.10) family.

It localises to the cell outer membrane. Functionally, serves as receptor for a broad-host-range vibriophage, KVP40. The sequence is that of Outer membrane protein OmpK from Vibrio parahaemolyticus.